The primary structure comprises 201 residues: Glycerol-3-phosphate acyltransferase (201 aa).

5 helical membrane passes run 9-29 (LTLI…FGLI), 60-80 (LAAA…LVAS), 86-106 (AAIG…WIGF), 116-136 (LGVL…VWIV), and 153-173 (IVVP…LFAI).

The protein belongs to the PlsY family. In terms of assembly, probably interacts with PlsX.

The protein localises to the cell inner membrane. It catalyses the reaction an acyl phosphate + sn-glycerol 3-phosphate = a 1-acyl-sn-glycero-3-phosphate + phosphate. The protein operates within lipid metabolism; phospholipid metabolism. Its function is as follows. Catalyzes the transfer of an acyl group from acyl-phosphate (acyl-PO(4)) to glycerol-3-phosphate (G3P) to form lysophosphatidic acid (LPA). This enzyme utilizes acyl-phosphate as fatty acyl donor, but not acyl-CoA or acyl-ACP. This chain is Glycerol-3-phosphate acyltransferase, found in Brucella anthropi (strain ATCC 49188 / DSM 6882 / CCUG 24695 / JCM 21032 / LMG 3331 / NBRC 15819 / NCTC 12168 / Alc 37) (Ochrobactrum anthropi).